The sequence spans 138 residues: Ribulose bisphosphate carboxylase small subunit (138 aa).

This sequence belongs to the RuBisCO small chain family. In terms of assembly, heterohexadecamer of 8 large and 8 small subunits.

The protein localises to the plastid. The protein resides in the chloroplast. Its function is as follows. RuBisCO catalyzes two reactions: the carboxylation of D-ribulose 1,5-bisphosphate, the primary event in carbon dioxide fixation, as well as the oxidative fragmentation of the pentose substrate in the photorespiration process. Both reactions occur simultaneously and in competition at the same active site. Although the small subunit is not catalytic it is essential for maximal activity. This Porphyridium aerugineum (Red microalga) protein is Ribulose bisphosphate carboxylase small subunit.